Consider the following 229-residue polypeptide: 3-dehydroquinate dehydratase (229 aa).

3-dehydroquinate-binding positions include 33 to 35 and Arg65; that span reads EWR. His121 serves as the catalytic Proton donor/acceptor. Lys146 serves as the catalytic Schiff-base intermediate with substrate. 3-dehydroquinate contacts are provided by Arg188, Ser207, and Gln211.

The protein belongs to the type-I 3-dehydroquinase family. In terms of assembly, homodimer.

It catalyses the reaction 3-dehydroquinate = 3-dehydroshikimate + H2O. Its pathway is metabolic intermediate biosynthesis; chorismate biosynthesis; chorismate from D-erythrose 4-phosphate and phosphoenolpyruvate: step 3/7. Functionally, involved in the third step of the chorismate pathway, which leads to the biosynthesis of aromatic amino acids. Catalyzes the cis-dehydration of 3-dehydroquinate (DHQ) and introduces the first double bond of the aromatic ring to yield 3-dehydroshikimate. The chain is 3-dehydroquinate dehydratase from Lactococcus lactis subsp. cremoris (strain SK11).